We begin with the raw amino-acid sequence, 508 residues long: Acyl-CoA-binding domain-containing protein 5 (508 aa).

One can recognise an ACB domain in the interval 44 to 133; it reads YETRFEAAVK…MKKIIETMPM (90 aa). An acyl-CoA is bound by residues 55-64, 75-79, lysine 101, and tyrosine 120; these read IQSLPKNGSF and YSFYK. Residues 175 to 215 form a disordered region; it reads AKAVNGKAESSDSGAESEEEEAQEELKGAEQSGSDDKKTLK. The stretch at 181 to 214 forms a coiled coil; it reads KAESSDSGAESEEEEAQEELKGAEQSGSDDKKTL. Residues serine 184, serine 185, serine 187, serine 191, serine 206, and serine 233 each carry the phosphoserine modification. Residues 198–215 are compositionally biased toward basic and acidic residues; it reads EELKGAEQSGSDDKKTLK. Residues 240–260 show a composition bias toward basic and acidic residues; it reads SDIHTDSSRSTRSSEDEKPGD. A disordered region spans residues 240-300; it reads SDIHTDSSRS…LTSDSDSEVY (61 aa). Serine 303 carries the phosphoserine modification. Disordered regions lie at residues 318–340 and 353–419; these read PTQH…NGSI and EVKH…RGSR. Residues 353 to 376 show a composition bias toward basic and acidic residues; sequence EVKHGGEDGRSSSGAPHRETRGGE. Position 405 is a phosphoserine (serine 405). Over residues 408-418 the composition is skewed to basic and acidic residues; sequence DGERWGSDRGS. Residues 428–453 adopt a coiled-coil conformation; sequence LVLIRLQEDMQNVLQRLHKLETLTAS. Lysine 446 carries the post-translational modification N6-acetyllysine. A helical transmembrane segment spans residues 480 to 500; that stretch reads GALAFAIIWPFIAQWLAHLYY.

The protein belongs to the ATG37 family.

The protein localises to the peroxisome membrane. Acyl-CoA binding protein which acts as the peroxisome receptor for pexophagy but is dispensable for aggrephagy and nonselective autophagy. Binds medium- and long-chain acyl-CoA esters. This Mus musculus (Mouse) protein is Acyl-CoA-binding domain-containing protein 5 (Acbd5).